Here is a 499-residue protein sequence, read N- to C-terminus: Alpha-amylase B (499 aa).

The first 21 residues, 1-21, serve as a signal peptide directing secretion; sequence MMVAWWSLFLYGLQVAAPALA. The cysteines at positions 51 and 59 are disulfide-linked. The substrate site is built by Gln-56 and Trp-104. A Ca(2+)-binding site is contributed by Asn-142. Residue His-143 coordinates substrate. Cysteines 171 and 185 form a disulfide. Residues Glu-183 and Asp-196 each contribute to the Ca(2+) site. A glycan (N-linked (GlcNAc...) asparagine) is linked at Asn-218. Residue Arg-225 coordinates substrate. 3 residues coordinate Ca(2+): Asp-227, His-231, and Glu-251. Catalysis depends on Asp-227, which acts as the Nucleophile. 230 to 231 is a substrate binding site; that stretch reads KH. Catalysis depends on Glu-251, which acts as the Proton donor. Position 255 (Gly-255) interacts with substrate. Cys-261 and Cys-304 are joined by a disulfide. Substrate contacts are provided by Asp-318 and Arg-365. Cysteines 461 and 496 form a disulfide.

This sequence belongs to the glycosyl hydrolase 13 family. Ca(2+) serves as cofactor.

The catalysed reaction is Endohydrolysis of (1-&gt;4)-alpha-D-glucosidic linkages in polysaccharides containing three or more (1-&gt;4)-alpha-linked D-glucose units.. The sequence is that of Alpha-amylase B (amyB) from Aspergillus awamori (Black koji mold).